We begin with the raw amino-acid sequence, 343 residues long: Heat-inducible transcription repressor HrcA (343 aa).

The protein belongs to the HrcA family.

Its function is as follows. Negative regulator of class I heat shock genes (grpE-dnaK-dnaJ and groELS operons). Prevents heat-shock induction of these operons. In Bacillus cytotoxicus (strain DSM 22905 / CIP 110041 / 391-98 / NVH 391-98), this protein is Heat-inducible transcription repressor HrcA.